A 444-amino-acid polypeptide reads, in one-letter code: Maintenance of mitochondrial morphology protein 1 (444 aa).

The Lumenal segment spans residues 1–110 (MNNLDNLAGN…SFSGWSFIEG (110 aa)). Residues 111–131 (FIIGQFSVIIVLIFFIKFFVF) traverse the membrane as a helical segment. Residues 132–444 (SDGSSSNSSN…TDDVPLSKAE (313 aa)) lie on the Cytoplasmic side of the membrane. Positions 207–419 (PSESLDWFNV…EPRFQCIRLP (213 aa)) constitute an SMP-LTD domain.

The protein belongs to the MMM1 family. In terms of assembly, homodimer. Component of the ER-mitochondria encounter structure (ERMES) or MDM complex, composed of MMM1, MDM10, MDM12 and MDM34. An MMM1 homodimer associates with one molecule of MDM12 on each side in a pairwise head-to-tail manner, and the SMP-LTD domains of MMM1 and MDM12 generate a continuous hydrophobic tunnel for phospholipid trafficking.

It is found in the endoplasmic reticulum membrane. In terms of biological role, component of the ERMES/MDM complex, which serves as a molecular tether to connect the endoplasmic reticulum (ER) and mitochondria. Components of this complex are involved in the control of mitochondrial shape and protein biogenesis, and function in nonvesicular lipid trafficking between the ER and mitochondria. The MDM12-MMM1 subcomplex functions in the major beta-barrel assembly pathway that is responsible for biogenesis of all outer membrane beta-barrel proteins, and acts in a late step after the SAM complex. The MDM10-MDM12-MMM1 subcomplex further acts in the TOM40-specific pathway after the action of the MDM12-MMM1 complex. Essential for establishing and maintaining the structure of mitochondria and maintenance of mtDNA nucleoids. The sequence is that of Maintenance of mitochondrial morphology protein 1 from Vanderwaltozyma polyspora (strain ATCC 22028 / DSM 70294 / BCRC 21397 / CBS 2163 / NBRC 10782 / NRRL Y-8283 / UCD 57-17) (Kluyveromyces polysporus).